We begin with the raw amino-acid sequence, 105 residues long: Large ribosomal subunit protein uL24 (105 aa).

Belongs to the universal ribosomal protein uL24 family. Part of the 50S ribosomal subunit.

One of two assembly initiator proteins, it binds directly to the 5'-end of the 23S rRNA, where it nucleates assembly of the 50S subunit. Functionally, one of the proteins that surrounds the polypeptide exit tunnel on the outside of the subunit. This is Large ribosomal subunit protein uL24 from Xylella fastidiosa (strain M12).